Consider the following 81-residue polypeptide: HQQFHCAAAEGQAKKSFSCKYCEKVYVSLGALKMHIRTHTLPCKCHLCGKAFSRPWLLQGHIRTHTGEKPFSCQHCNRAFA.

C2H2-type zinc fingers lie at residues 1–5 (HQQFH), 17–39 (FSCK…IRTH), 43–65 (CKCH…IRTH), and 71–81 (FSCQHCNRAFA).

It belongs to the snail C2H2-type zinc-finger protein family.

It localises to the nucleus. This Apis mellifera (Honeybee) protein is Escargot/snail protein homolog.